A 107-amino-acid chain; its full sequence is Antimicrobial peptide damicornin (107 aa).

Residues Met1–Ala22 form the signal peptide. Residues Ala23–Arg67 constitute a propeptide that is removed on maturation. A compositionally biased stretch (acidic residues) spans Asp37–Ala46. The interval Asp37 to Val62 is disordered. The span at Asn47–Ala61 shows a compositional bias: low complexity. Disulfide bonds link Cys69-Cys105, Cys78-Cys99, and Cys85-Cys103. Arg106 is modified (arginine amide).

This sequence belongs to the coral AMP family. In terms of tissue distribution, is specifically expressed in the granular cells of the ectoderm.

It localises to the cytoplasm. The protein localises to the stress granule. Its subcellular location is the secreted. Functionally, cationic peptide with probable antimicrobial activity against coral pathogens. Shows in vitro activity against Gram-positive bacteria and the filamentous fungus F.oxysporum (MIC=1.25 uM). Gram-positive bacteria tested are B.megaterium (MIC=20 uM), S.aureus (MIC=5 uM), M. luteus (MIC=1.25 uM), B.stationis (MIC=10 uM), M.maritypicum (MIC=20 uM). Has no or little effect against Gram-negative bacteria (the coral pathogen V.coralliilyticus (MIC&gt;20 uM), V.aesturianus (MIC&gt;20 uM), V.shiloi (MIC&gt;20 uM), and E.coli (MIC=10 uM)). Has no hemolytic activity against sheep erythrocytes. This Pocillopora damicornis (Cauliflower coral) protein is Antimicrobial peptide damicornin.